Consider the following 306-residue polypeptide: Small ribosomal subunit protein uS2 (306 aa).

At Ser2 the chain carries N-acetylserine. Laminin-binding stretches follow at residues 161–180 (IPCN…MLAR) and 205–229 (RDPE…EFQG). [DE]-W-[ST] repeat units lie at residues 230 to 232 (EWT), 245 to 247 (DWS), 276 to 278 (DWS), 286 to 288 (DWS), and 304 to 306 (EWS). The laminin-binding stretch occupies residues 242–306 (EVADWSEGVQ…EWTGTTTEWS (65 aa)). The tract at residues 247 to 306 (SEGVQVPSVPIQQFTAERTDVPPAPKPTEDWSTQPASTDDWSAAPTAQASEWTGTTTEWS) is disordered. The segment covering 276–306 (DWSTQPASTDDWSAAPTAQASEWTGTTTEWS) has biased composition (polar residues).

It belongs to the universal ribosomal protein uS2 family. Monomer (37LRP) and homodimer (67LR). Component of the small ribosomal subunit. Mature ribosomes consist of a small (40S) and a large (60S) subunit. The 40S subunit contains about 33 different proteins and 1 molecule of RNA (18S). The 60S subunit contains about 49 different proteins and 3 molecules of RNA (28S, 5.8S and 5S). Interacts with rps21. Interacts with several laminins including at least lamb1. Interacts with mdk. Post-translationally, acylated. Acylation may be a prerequisite for conversion of the monomeric 37 kDa laminin receptor precursor (37LRP) to the mature dimeric 67 kDa laminin receptor (67LR), and may provide a mechanism for membrane association. In terms of processing, cleaved by stromelysin-3 (ST3) at the cell surface. Cleavage by stromelysin-3 may be a mechanism to alter cell-extracellular matrix interactions.

Its subcellular location is the cell membrane. The protein resides in the cytoplasm. It is found in the nucleus. In terms of biological role, required for the assembly and/or stability of the 40S ribosomal subunit. Required for the processing of the 20S rRNA-precursor to mature 18S rRNA in a late step of the maturation of 40S ribosomal subunits. Also functions as a cell surface receptor for laminin. Plays a role in cell adhesion to the basement membrane and in the consequent activation of signaling transduction pathways. May play a role in cell fate determination and tissue morphogenesis. In Xenopus laevis (African clawed frog), this protein is Small ribosomal subunit protein uS2 (rpsa).